The sequence spans 273 residues: MEQLQAVIEDAFERRAEITPRNVEANLKESVAQVINMLDTGKLRVAEKINDEWVTRQWVKKAVLLSFRMEDNYFIKGGFSNYFDKIPSKFADYSSRDFRDGGFRVVPPAAVRKGAFIANNVVLMPSYVNIGAYVDEGTMVDTWATVGSCAQVGKNVHLSGGVGIGGVLEPVQASPTIIEDNCFIGARSEIVEGVIVGENSVISMGVYIGQSTRIYNRETGEVTYGRIPSGSVVVSGSLPADNGRYSLYCAVIVKQVDAKTRSKTGINELLRGI.

Residues Arg104 and Asp141 each coordinate substrate.

The protein belongs to the transferase hexapeptide repeat family. In terms of assembly, homotrimer.

The protein resides in the cytoplasm. It carries out the reaction (S)-2,3,4,5-tetrahydrodipicolinate + succinyl-CoA + H2O = (S)-2-succinylamino-6-oxoheptanedioate + CoA. It functions in the pathway amino-acid biosynthesis; L-lysine biosynthesis via DAP pathway; LL-2,6-diaminopimelate from (S)-tetrahydrodipicolinate (succinylase route): step 1/3. The polypeptide is 2,3,4,5-tetrahydropyridine-2,6-dicarboxylate N-succinyltransferase (Nitrosomonas eutropha (strain DSM 101675 / C91 / Nm57)).